The primary structure comprises 162 residues: NADH-quinone oxidoreductase subunit I (162 aa).

4Fe-4S ferredoxin-type domains follow at residues Arg54–Thr83 and Ser93–Ile122. [4Fe-4S] cluster-binding residues include Cys63, Cys66, Cys69, Cys73, Cys102, Cys105, Cys108, and Cys112.

This sequence belongs to the complex I 23 kDa subunit family. In terms of assembly, NDH-1 is composed of 14 different subunits. Subunits NuoA, H, J, K, L, M, N constitute the membrane sector of the complex. Requires [4Fe-4S] cluster as cofactor.

It is found in the cell inner membrane. It carries out the reaction a quinone + NADH + 5 H(+)(in) = a quinol + NAD(+) + 4 H(+)(out). In terms of biological role, NDH-1 shuttles electrons from NADH, via FMN and iron-sulfur (Fe-S) centers, to quinones in the respiratory chain. The immediate electron acceptor for the enzyme in this species is believed to be ubiquinone. Couples the redox reaction to proton translocation (for every two electrons transferred, four hydrogen ions are translocated across the cytoplasmic membrane), and thus conserves the redox energy in a proton gradient. This is NADH-quinone oxidoreductase subunit I from Francisella tularensis subsp. tularensis (strain FSC 198).